The primary structure comprises 245 residues: Exosome complex component RRP41 (245 aa).

A2 carries the N-acetylalanine modification.

This sequence belongs to the RNase PH family. As to quaternary structure, component of the RNA exosome core complex (Exo-9), composed of EXOSC1, EXOSC2, EXOSC3, EXOSC4, EXOSC5, EXOSC6, EXOSC7, EXOSC8 and EXOSC9; within the complex interacts with EXOSC2, EXOSC7 and EXOSC9. The catalytically inactive RNA exosome core complex (Exo-9) associates with the catalytic subunit EXOSC10/RRP6. Exo-9 may associate with DIS3 to form the nucleolar exosome complex, or DIS3L to form the cytoplasmic exosome complex. Exo-9 is formed by a hexameric base ring consisting of the heterodimers EXOSC4-EXOSC9, EXOSC5-EXOSC8 and EXOSC6-EXOSC7, and a cap ring consisting of EXOSC1, EXOSC2 and EXOSC3. The RNA exosome complex associates with cofactors C1D/RRP47, MPHOSPH6/MPP6 and MTREX/MTR4. Interacts with DDX60. Interacts with DIS3; the interaction is direct.

It is found in the cytoplasm. Its subcellular location is the nucleus. The protein localises to the nucleolus. The protein resides in the nucleoplasm. Non-catalytic component of the RNA exosome complex which has 3'-&gt;5' exoribonuclease activity and participates in a multitude of cellular RNA processing and degradation events. In the nucleus, the RNA exosome complex is involved in proper maturation of stable RNA species such as rRNA, snRNA and snoRNA, in the elimination of RNA processing by-products and non-coding 'pervasive' transcripts, such as antisense RNA species and promoter-upstream transcripts (PROMPTs), and of mRNAs with processing defects, thereby limiting or excluding their export to the cytoplasm. The RNA exosome may be involved in Ig class switch recombination (CSR) and/or Ig variable region somatic hypermutation (SHM) by targeting AICDA deamination activity to transcribed dsDNA substrates. In the cytoplasm, the RNA exosome complex is involved in general mRNA turnover and specifically degrades inherently unstable mRNAs containing AU-rich elements (AREs) within their 3' untranslated regions, and in RNA surveillance pathways, preventing translation of aberrant mRNAs. It seems to be involved in degradation of histone mRNA. The catalytic inactive RNA exosome core complex of 9 subunits (Exo-9) is proposed to play a pivotal role in the binding and presentation of RNA for ribonucleolysis, and to serve as a scaffold for the association with catalytic subunits and accessory proteins or complexes. EXOSC4 binds to ARE-containing RNAs. The chain is Exosome complex component RRP41 (Exosc4) from Mus musculus (Mouse).